The chain runs to 582 residues: Threonine--tRNA ligase (582 aa).

Residues 185–478 (DHRKLGKELE…LTEQYGGAFP (294 aa)) form a catalytic region. 3 residues coordinate Zn(2+): Cys-278, His-329, and His-455.

This sequence belongs to the class-II aminoacyl-tRNA synthetase family. In terms of assembly, homodimer. The cofactor is Zn(2+).

It is found in the cytoplasm. The enzyme catalyses tRNA(Thr) + L-threonine + ATP = L-threonyl-tRNA(Thr) + AMP + diphosphate + H(+). Functionally, catalyzes the attachment of threonine to tRNA(Thr) in a two-step reaction: L-threonine is first activated by ATP to form Thr-AMP and then transferred to the acceptor end of tRNA(Thr). Also edits incorrectly charged L-seryl-tRNA(Thr). This is Threonine--tRNA ligase from Dehalococcoides mccartyi (strain CBDB1).